Here is a 266-residue protein sequence, read N- to C-terminus: Ribonuclease 3 (266 aa).

Residues 34–158 (IERCQEILGY…VIAALYIDGG (125 aa)) form the RNase III domain. A Mg(2+)-binding site is contributed by Glu72. Asp76 is a catalytic residue. Positions 144 and 147 each coordinate Mg(2+). Glu147 is an active-site residue. The DRBM domain maps to 185 to 254 (NHKSVLQQFA…AANALAELHN (70 aa)).

It belongs to the ribonuclease III family. Homodimer. It depends on Mg(2+) as a cofactor.

It localises to the cytoplasm. It carries out the reaction Endonucleolytic cleavage to 5'-phosphomonoester.. Functionally, digests double-stranded RNA. Involved in the processing of primary rRNA transcript to yield the immediate precursors to the large and small rRNAs (23S and 16S). Processes some mRNAs, and tRNAs when they are encoded in the rRNA operon. Processes pre-crRNA and tracrRNA of type II CRISPR loci if present in the organism. The polypeptide is Ribonuclease 3 (Rhodopirellula baltica (strain DSM 10527 / NCIMB 13988 / SH1)).